The chain runs to 367 residues: Ferredoxin--NADP reductase 2 (367 aa).

Positions 56, 64, 69, 109, 144, 309, and 350 each coordinate FAD.

This sequence belongs to the ferredoxin--NADP reductase type 2 family. As to quaternary structure, homodimer. Requires FAD as cofactor.

The catalysed reaction is 2 reduced [2Fe-2S]-[ferredoxin] + NADP(+) + H(+) = 2 oxidized [2Fe-2S]-[ferredoxin] + NADPH. This Cupriavidus metallidurans (strain ATCC 43123 / DSM 2839 / NBRC 102507 / CH34) (Ralstonia metallidurans) protein is Ferredoxin--NADP reductase 2.